A 631-amino-acid polypeptide reads, in one-letter code: FAST kinase domain-containing protein 4 (631 aa).

The N-terminal 107 residues, 1–107 (MAAHLVKRCT…NQAAMVLIRL (107 aa)), are a transit peptide targeting the mitochondrion. At Ser-553 the chain carries Phosphoserine. The 59-residue stretch at 561–619 (LAFLRWEFPNFNSRSKDLLGRFVLARRHIVAAGFLIVDVPFYEWLELKSEWQKGAYLKD) folds into the RAP domain.

The protein belongs to the FAST kinase family. Ubiquitously expressed. Expression detected in spleen, thymus, testis, ovary, colon, heart, smooth muscle, kidney, brain, lung, liver and white adipose tissue with highest expression in smooth muscle.

It is found in the mitochondrion matrix. In terms of biological role, plays a role in processing of mitochondrial RNA precursors and in stabilization of a subset of mature mitochondrial RNA species, such as MT-CO1, MT-CO2, MT-CYB, MT-CO3, MT-ND3, MT-ND5 and MT-ATP8/6. May play a role in cell cycle progression. The protein is FAST kinase domain-containing protein 4 of Homo sapiens (Human).